The sequence spans 544 residues: MSAKEIRFSTDARDRLLRGVELLNNAVKVTLGPKGRNVVIDKAYGAPRITKDGVSVAKEIELEDKFENMGAQMVREVASKTNDLAGDGTTTATVLAASIFREGAKLVAAGMNPMDLRRGIDLGVIAVVKEIKARAMKVKSSGEIAQVGTIAANGDATIGEMIARAMDKVGNEGVITVEEARTAETELDVVEGMQFDRGYLSPYFVTNAEKMRVELEEPYILVHEKKLGSLQALLPILEAVVQTGKPLLLISEDVEGEALATLVVNKLRGGLKVAAVKAPGFGDRRKAMLEDIAVLTAGQMISEDLGIKLENVTLDMLGHAKRVLIDKESTTIIDGSGEKAAIQARIQQIKAQIEDTTSDYDKEKLQERLAKLAGGVAVIRVGGATETEVKEKKDRIDDALNATRAAVEEGIVPGGGVALLRAKSALTGLTGENADVTAGISIVLRALEAPIRQIVDNAGFEGSIVVGKLAGSNDHNQGFDAQTETYVDMIEAGIVDPAKVVRTALQDAGSIAALLITAEVMIADIPAKDSAPAAGNGGMGAMGY.

Residues 30–33 (TLGP), Lys-51, 87–91 (DGTTT), Gly-415, and Asp-496 contribute to the ATP site.

The protein belongs to the chaperonin (HSP60) family. Forms a cylinder of 14 subunits composed of two heptameric rings stacked back-to-back. Interacts with the co-chaperonin GroES.

It localises to the cytoplasm. It carries out the reaction ATP + H2O + a folded polypeptide = ADP + phosphate + an unfolded polypeptide.. In terms of biological role, together with its co-chaperonin GroES, plays an essential role in assisting protein folding. The GroEL-GroES system forms a nano-cage that allows encapsulation of the non-native substrate proteins and provides a physical environment optimized to promote and accelerate protein folding. This Rhizobium johnstonii (strain DSM 114642 / LMG 32736 / 3841) (Rhizobium leguminosarum bv. viciae) protein is Chaperonin GroEL 2.